We begin with the raw amino-acid sequence, 341 residues long: Glycerol-3-phosphate dehydrogenase [NAD(P)+] (341 aa).

NADPH-binding residues include serine 17, tryptophan 18, arginine 37, and lysine 112. Residues lysine 112 and glycine 140 each coordinate sn-glycerol 3-phosphate. Alanine 144 contacts NADPH. The sn-glycerol 3-phosphate site is built by lysine 195, aspartate 248, serine 258, arginine 259, and asparagine 260. The Proton acceptor role is filled by lysine 195. Arginine 259 contributes to the NADPH binding site. Valine 283 and glutamate 285 together coordinate NADPH.

It belongs to the NAD-dependent glycerol-3-phosphate dehydrogenase family.

It localises to the cytoplasm. The enzyme catalyses sn-glycerol 3-phosphate + NAD(+) = dihydroxyacetone phosphate + NADH + H(+). The catalysed reaction is sn-glycerol 3-phosphate + NADP(+) = dihydroxyacetone phosphate + NADPH + H(+). It functions in the pathway membrane lipid metabolism; glycerophospholipid metabolism. In terms of biological role, catalyzes the reduction of the glycolytic intermediate dihydroxyacetone phosphate (DHAP) to sn-glycerol 3-phosphate (G3P), the key precursor for phospholipid synthesis. The protein is Glycerol-3-phosphate dehydrogenase [NAD(P)+] of Mycobacterium avium (strain 104).